Consider the following 564-residue polypeptide: Ferric/cupric reductase transmembrane component 2 (564 aa).

The next 2 helical transmembrane spans lie at 10-30 (TLGSIALIFVLLIGFALLFLL) and 66-86 (FIFLATHKAQMTLILSPLVML). Asn-106 carries N-linked (GlcNAc...) asparagine glycosylation. A helical membrane pass occupies residues 110-130 (VAARLGYLSCGLFFVSYFFSL). The Ferric oxidoreductase domain maps to 114-229 (LGYLSCGLFF…TCSVLIIFLI (116 aa)). The heme site is built by His-150 and His-164. 3 helical membrane passes run 152–172 (WLSVYAVLISVLHGILFMIFS), 184–204 (ISIYGYFITVVLFLMTVASLP), and 210–230 (FFEWFFVLHHTCSVLIIFLIW). Heme-binding residues include His-218 and His-232. Positions 254–410 (RLFRSIWNRS…DGPYGTTSNV (157 aa)) constitute an FAD-binding FR-type domain. Asn-261 carries an N-linked (GlcNAc...) asparagine glycan. FAD is bound at residue 310–316 (HPFTLAS). Asn-350 carries N-linked (GlcNAc...) asparagine glycosylation. 419 to 427 (LIAGGVGFS) is a binding site for NAD(+). N-linked (GlcNAc...) asparagine glycosylation is found at Asn-442, Asn-496, and Asn-548.

It belongs to the ferric reductase (FRE) family. The cofactor is FAD. It depends on heme as a cofactor.

The protein resides in the cell membrane. It is found in the endoplasmic reticulum membrane. The enzyme catalyses 2 a Fe(II)-siderophore + NADP(+) + H(+) = 2 a Fe(III)-siderophore + NADPH. Functionally, metalloreductase responsible for reducing extracellular iron and copper prior to import. Catalyzes the reductive uptake of Fe(3+)-salts and Fe(3+) bound to catecholate or hydroxamate siderophores. Fe(3+) is reduced to Fe(2+), which then dissociates from the siderophore and can be imported by the high-affinity Fe(2+) transport complex in the plasma membrane. Also participates in Cu(2+) reduction and Cu(+) uptake. The sequence is that of Ferric/cupric reductase transmembrane component 2 (frp2) from Schizosaccharomyces pombe (strain 972 / ATCC 24843) (Fission yeast).